A 78-amino-acid polypeptide reads, in one-letter code: Small ribosomal subunit protein eS17 (78 aa).

It belongs to the eukaryotic ribosomal protein eS17 family.

This Sulfurisphaera tokodaii (strain DSM 16993 / JCM 10545 / NBRC 100140 / 7) (Sulfolobus tokodaii) protein is Small ribosomal subunit protein eS17.